Here is a 317-residue protein sequence, read N- to C-terminus: Ribosomal protein L11 methyltransferase (317 aa).

S-adenosyl-L-methionine contacts are provided by T158, G179, D201, and N244.

The protein belongs to the methyltransferase superfamily. PrmA family.

It is found in the cytoplasm. It catalyses the reaction L-lysyl-[protein] + 3 S-adenosyl-L-methionine = N(6),N(6),N(6)-trimethyl-L-lysyl-[protein] + 3 S-adenosyl-L-homocysteine + 3 H(+). Functionally, methylates ribosomal protein L11. This is Ribosomal protein L11 methyltransferase from Streptococcus pyogenes serotype M5 (strain Manfredo).